The chain runs to 267 residues: Dihydropteroate synthase (267 aa).

In terms of domain architecture, Pterin-binding spans 1-251 (MTKTKIMGIL…NVELNAKLAK (251 aa)). Asn11 lines the Mg(2+) pocket. Residues Thr51, Asp84, Asn103, Asp167, Lys203, and 239–241 (RVH) each bind (7,8-dihydropterin-6-yl)methyl diphosphate.

The protein belongs to the DHPS family. Homodimer. Mg(2+) is required as a cofactor.

The catalysed reaction is (7,8-dihydropterin-6-yl)methyl diphosphate + 4-aminobenzoate = 7,8-dihydropteroate + diphosphate. It participates in cofactor biosynthesis; tetrahydrofolate biosynthesis; 7,8-dihydrofolate from 2-amino-4-hydroxy-6-hydroxymethyl-7,8-dihydropteridine diphosphate and 4-aminobenzoate: step 1/2. Its function is as follows. Catalyzes the condensation of para-aminobenzoate (pABA) with 6-hydroxymethyl-7,8-dihydropterin diphosphate (DHPt-PP) to form 7,8-dihydropteroate (H2Pte), the immediate precursor of folate derivatives. The chain is Dihydropteroate synthase (folP) from Staphylococcus aureus (strain Mu50 / ATCC 700699).